The following is a 61-amino-acid chain: Metallothionein-2 (61 aa).

N-acetylmethionine is present on M1. Residues 1 to 29 (MDPNCSCATDGSCSCAGSCKCKQCKCTSC) are beta. Residues C5, C7, C13, C15, C19, C21, C24, C26, C29, C33, C34, C36, C37, C41, C44, C48, C50, and C57 each contribute to the a divalent metal cation site. The tract at residues 30 to 61 (KKSCCSCCPVGCAKCSQGCICKEASDKCSCCA) is alpha. Residue S58 is modified to Phosphoserine. A divalent metal cation-binding residues include C59 and C60.

The protein belongs to the metallothionein superfamily. Type 1 family.

Functionally, metallothioneins have a high content of cysteine residues that bind various heavy metals; these proteins are transcriptionally regulated by both heavy metals and glucocorticoids. This is Metallothionein-2 (Mt2) from Rattus norvegicus (Rat).